The primary structure comprises 188 residues: Elongation factor P (188 aa).

It belongs to the elongation factor P family.

It is found in the cytoplasm. It functions in the pathway protein biosynthesis; polypeptide chain elongation. In terms of biological role, involved in peptide bond synthesis. Stimulates efficient translation and peptide-bond synthesis on native or reconstituted 70S ribosomes in vitro. Probably functions indirectly by altering the affinity of the ribosome for aminoacyl-tRNA, thus increasing their reactivity as acceptors for peptidyl transferase. In Chlorobaculum tepidum (strain ATCC 49652 / DSM 12025 / NBRC 103806 / TLS) (Chlorobium tepidum), this protein is Elongation factor P.